The primary structure comprises 694 residues: LMBR1 domain-containing protein 2 homolog (694 aa).

The Extracellular portion of the chain corresponds to 1 to 3 (MAY). The helical transmembrane segment at 4–26 (LLSFGIVAALFLASISLYRYGNI) threads the bilayer. Topologically, residues 27 to 30 (PRQH) are cytoplasmic. A helical transmembrane segment spans residues 31–51 (ILVTLSVLTAWCFSFLIVFTI). Residues 52–106 (PLDVTSTLYRQCVEEHRPTPAPNVTNTSSATVGPPPQCQEPWGMVPASVFPNLWR) lie on the Extracellular side of the membrane. Residues asparagine 74 and asparagine 77 are each glycosylated (N-linked (GlcNAc...) asparagine). The helical transmembrane segment at 107-127 (IIYWSSQFLTWLIMPLMQSYL) threads the bilayer. The Cytoplasmic segment spans residues 128–144 (KAGDFTVKGKLKSALIE). Residues 145–165 (NAIYYGSYLFICGVLLIYIAV) traverse the membrane as a helical segment. The Extracellular portion of the chain corresponds to 166 to 181 (KGESLDWQKLKAIASS). A helical membrane pass occupies residues 182-202 (ASNTWGLFLLILLLGYALVEV). Residues 203 to 381 (PRSLWNNAKP…ECLLKAPFLK (179 aa)) lie on the Cytoplasmic side of the membrane. Residues 222–249 (KAAKLSTEKAEAEEHVDDILESLQGLSR) are a coiled coil. Residues 382–402 (TMCVLTATMSAMVVWSELTFF) form a helical membrane-spanning segment. Residues 403 to 426 (SRHPVLSIFANVIYVAKESYDFFT) lie on the Extracellular side of the membrane. Residues 427-447 (IEVFSMVVLCYFFYCTYSTIL) traverse the membrane as a helical segment. At 448-467 (RIRFLNLYYLAPHHQTNEHS) the chain is on the cytoplasmic side. Residues 468-488 (LIFSGMLLCRLTPPMCLNFLG) form a helical membrane-spanning segment. At 489-514 (LIHMDTHIIPNRIMETVYTQIMGHMD) the chain is on the extracellular side. A helical transmembrane segment spans residues 515-535 (VIGIISNGFNIYFPMCMLAFC). Over 536–694 (LATWFSLGSR…PPPRGLFDDV (159 aa)) the chain is Cytoplasmic. A coiled-coil region spans residues 564 to 592 (ELVQEGKDLIAREKRRRQRAEEAMARRRD). Positions 673–694 (DYEAETDGRIVGPPPRGLFDDV) are disordered.

Belongs to the LIMR family.

It is found in the membrane. The polypeptide is LMBR1 domain-containing protein 2 homolog (Drosophila melanogaster (Fruit fly)).